The following is a 242-amino-acid chain: Probable transcriptional regulatory protein Bphyt_1301 (242 aa).

This sequence belongs to the TACO1 family.

The protein resides in the cytoplasm. This Paraburkholderia phytofirmans (strain DSM 17436 / LMG 22146 / PsJN) (Burkholderia phytofirmans) protein is Probable transcriptional regulatory protein Bphyt_1301.